A 185-amino-acid chain; its full sequence is Peptidyl-tRNA hydrolase (185 aa).

Tyr14 contributes to the tRNA binding site. Catalysis depends on His19, which acts as the Proton acceptor. TRNA-binding residues include Tyr64, Asn66, and Asn112.

Belongs to the PTH family. Monomer.

It is found in the cytoplasm. It catalyses the reaction an N-acyl-L-alpha-aminoacyl-tRNA + H2O = an N-acyl-L-amino acid + a tRNA + H(+). Functionally, hydrolyzes ribosome-free peptidyl-tRNAs (with 1 or more amino acids incorporated), which drop off the ribosome during protein synthesis, or as a result of ribosome stalling. Catalyzes the release of premature peptidyl moieties from peptidyl-tRNA molecules trapped in stalled 50S ribosomal subunits, and thus maintains levels of free tRNAs and 50S ribosomes. The chain is Peptidyl-tRNA hydrolase from Ligilactobacillus salivarius (strain UCC118) (Lactobacillus salivarius).